Here is a 182-residue protein sequence, read N- to C-terminus: Crossover junction endodeoxyribonuclease RuvC (182 aa).

Catalysis depends on residues aspartate 7, glutamate 69, and aspartate 141. The Mg(2+) site is built by aspartate 7, glutamate 69, and aspartate 141.

It belongs to the RuvC family. Homodimer which binds Holliday junction (HJ) DNA. The HJ becomes 2-fold symmetrical on binding to RuvC with unstacked arms; it has a different conformation from HJ DNA in complex with RuvA. In the full resolvosome a probable DNA-RuvA(4)-RuvB(12)-RuvC(2) complex forms which resolves the HJ. The cofactor is Mg(2+).

It is found in the cytoplasm. The enzyme catalyses Endonucleolytic cleavage at a junction such as a reciprocal single-stranded crossover between two homologous DNA duplexes (Holliday junction).. Functionally, the RuvA-RuvB-RuvC complex processes Holliday junction (HJ) DNA during genetic recombination and DNA repair. Endonuclease that resolves HJ intermediates. Cleaves cruciform DNA by making single-stranded nicks across the HJ at symmetrical positions within the homologous arms, yielding a 5'-phosphate and a 3'-hydroxyl group; requires a central core of homology in the junction. The consensus cleavage sequence is 5'-(A/T)TT(C/G)-3'. Cleavage occurs on the 3'-side of the TT dinucleotide at the point of strand exchange. HJ branch migration catalyzed by RuvA-RuvB allows RuvC to scan DNA until it finds its consensus sequence, where it cleaves and resolves the cruciform DNA. The sequence is that of Crossover junction endodeoxyribonuclease RuvC from Albidiferax ferrireducens (strain ATCC BAA-621 / DSM 15236 / T118) (Rhodoferax ferrireducens).